The following is a 28-amino-acid chain: Ornatin-D (28 aa).

Belongs to the ornatin family.

Its subcellular location is the secreted. Its function is as follows. Potent inhibitor of fibrinogen interaction with platelet receptors expressed on glycoprotein IIb-IIIa complex. May prevent blood from clotting during either feeding and/or storage of ingested blood. The chain is Ornatin-D from Placobdella ornata (Turtle leech).